We begin with the raw amino-acid sequence, 340 residues long: Ketol-acid reductoisomerase (NADP(+)) (340 aa).

Residues 1–183 (MAITVYYDKD…GGGRTGIIET (183 aa)) enclose the KARI N-terminal Rossmann domain. Residues 26–29 (FGSQ), S54, and 84–87 (DEFQ) each bind NADP(+). H109 is a catalytic residue. An NADP(+)-binding site is contributed by G135. A KARI C-terminal knotted domain is found at 184-329 (TFKAETETDL…EKLRGMMPWI (146 aa)). Residues D192, E196, E228, and E232 each contribute to the Mg(2+) site. A substrate-binding site is contributed by S253.

Belongs to the ketol-acid reductoisomerase family. Mg(2+) serves as cofactor.

The enzyme catalyses (2R)-2,3-dihydroxy-3-methylbutanoate + NADP(+) = (2S)-2-acetolactate + NADPH + H(+). It carries out the reaction (2R,3R)-2,3-dihydroxy-3-methylpentanoate + NADP(+) = (S)-2-ethyl-2-hydroxy-3-oxobutanoate + NADPH + H(+). The protein operates within amino-acid biosynthesis; L-isoleucine biosynthesis; L-isoleucine from 2-oxobutanoate: step 2/4. It participates in amino-acid biosynthesis; L-valine biosynthesis; L-valine from pyruvate: step 2/4. Involved in the biosynthesis of branched-chain amino acids (BCAA). Catalyzes an alkyl-migration followed by a ketol-acid reduction of (S)-2-acetolactate (S2AL) to yield (R)-2,3-dihydroxy-isovalerate. In the isomerase reaction, S2AL is rearranged via a Mg-dependent methyl migration to produce 3-hydroxy-3-methyl-2-ketobutyrate (HMKB). In the reductase reaction, this 2-ketoacid undergoes a metal-dependent reduction by NADPH to yield (R)-2,3-dihydroxy-isovalerate. This Campylobacter fetus subsp. fetus (strain 82-40) protein is Ketol-acid reductoisomerase (NADP(+)).